A 219-amino-acid polypeptide reads, in one-letter code: Small ribosomal subunit protein uS3c (219 aa).

Residues 43 to 118 enclose the KH type-2 domain; it reads IKNYVQKNMK…KLNIAITRIA (76 aa).

Belongs to the universal ribosomal protein uS3 family. As to quaternary structure, part of the 30S ribosomal subunit.

The protein localises to the plastid. Its subcellular location is the chloroplast. This Panax ginseng (Korean ginseng) protein is Small ribosomal subunit protein uS3c (rps3).